The primary structure comprises 141 residues: MMSFVSLLVVGILFPAIQAKQFTKCELSQVLKDMDGYGDITLPEWICTIFHISGYDTKTIVHDNGSTEYGLFQINNKLWCRDNQIQSKNICGISCDKFLDDDLTDDMMCAKKILDNEGIDYWLAHKALCSEKLDQWLCEKM.

A signal peptide spans 1–19 (MMSFVSLLVVGILFPAIQA). A C-type lysozyme domain is found at 20 to 141 (KQFTKCELSQ…KLDQWLCEKM (122 aa)). Cystine bridges form between C25–C138, C47–C129, C80–C95, and C91–C109. Residues K97, D100, D102, D105, and D106 each coordinate Ca(2+).

This sequence belongs to the glycosyl hydrolase 22 family. As to quaternary structure, lactose synthase (LS) is a heterodimer of a catalytic component, beta1,4-galactosyltransferase (beta4Gal-T1) and a regulatory component, alpha-lactalbumin (LA). In terms of tissue distribution, mammary gland specific. Secreted in milk.

The protein localises to the secreted. Regulatory subunit of lactose synthase, changes the substrate specificity of galactosyltransferase in the mammary gland making glucose a good acceptor substrate for this enzyme. This enables LS to synthesize lactose, the major carbohydrate component of milk. In other tissues, galactosyltransferase transfers galactose onto the N-acetylglucosamine of the oligosaccharide chains in glycoproteins. This is Alpha-lactalbumin (LALBA) from Sus scrofa (Pig).